Consider the following 1005-residue polypeptide: Beta/gamma crystallin domain-containing protein 3 (1005 aa).

S122, S129, S130, S136, and S140 each carry phosphoserine. Disordered stretches follow at residues 132–159 (EDVLSSEVSPGHHGSSKSRESANQPSSV) and 173–198 (NFDGDDRQEAEEEEEEAVASGKDWRT). Residues 180–189 (QEAEEEEEEA) are compositionally biased toward acidic residues. 9 Beta/gamma crystallin 'Greek key' domains span residues 367–416 (GCWI…KRVL), 462–500 (GVWLAYPDIHFKGQATILEEDQGLFEISAAEMKSLHPLQ), 512–556 (LKVI…RVIG), 557–599 (GVWV…RYLQ), 605–647 (SSIT…HVKS), 648–690 (GVWV…RPIQ), 701–737 (HLLKAFSKAGFQGECIDFVKECADLTSFTPASFKVLR), 738–781 (GCWL…QPID), and 828–869 (GLWI…RPMK). Residues 871–1003 (PAVYIRIRNR…GEETQKWDIE (133 aa)) form the Ricin B-type lectin domain.

It belongs to the beta/gamma-crystallin family.

The chain is Beta/gamma crystallin domain-containing protein 3 (Crybg3) from Mus musculus (Mouse).